Reading from the N-terminus, the 379-residue chain is F-box/kelch-repeat protein At4g33900 (379 aa).

An F-box domain is found at 9–55; it reads IKRFLMLPDDLVFNCLARVSRLHYPTLSLVSKKFRFLLASKELYQTR. Kelch repeat units lie at residues 116–175, 176–222, and 262–308; these read EIYA…TLDG, RIYV…LSIS, and SCCV…RNFK.

In Arabidopsis thaliana (Mouse-ear cress), this protein is F-box/kelch-repeat protein At4g33900.